Reading from the N-terminus, the 776-residue chain is Glucocorticoid receptor (776 aa).

Disordered stretches follow at residues 1 to 25, 47 to 86, and 394 to 415; these read MDPK…YNDK, SCPT…PQPD, and SSPG…STGP. Residues 1 to 419 are modulating; the sequence is MDPKDLLKPS…STSTGPPPKL (419 aa). Positions 47-83 are enriched in polar residues; the sequence is SCPTSTASQSNTRQQQHFQKQLTATGDSTNGLNNNVP. Residues 403 to 413 are compositionally biased toward low complexity; that stretch reads SPSPSTSSTST. 2 NR C4-type zinc fingers span residues 420–440 and 456–480; these read CLVC…CGSC and CAGR…YRKC. A DNA-binding region (nuclear receptor) is located at residues 420-485; the sequence is CLVCSDEASG…RYRKCLQAGM (66 aa). Positions 486-522 are hinge; sequence NLEARKTKKKIKGIQQSTTATARESPETSMTRTLVPA. The NR LBD domain maps to 523–757; it reads SVAQLTPTLI…FPDMLSEIIS (235 aa).

This sequence belongs to the nuclear hormone receptor family. NR3 subfamily. In terms of assembly, heteromultimeric cytoplasmic complex with HSP90. Upon ligand binding the complex undergoes a conformation change and moves to the nucleus, where it dissociates. Binds to DNA as a homodimer, and as heterodimer with NR3C2. Interaction with numerous other transcription factors modulates transcription activation. As to expression, expressed in liver with relative abundance.

It is found in the cytoplasm. The protein localises to the nucleus. Its subcellular location is the mitochondrion. The protein resides in the cytoskeleton. It localises to the spindle. It is found in the microtubule organizing center. The protein localises to the centrosome. Receptor for glucocorticoids (GC). Has a dual mode of action: as a transcription factor that binds to glucocorticoid response elements (GRE), both for nuclear and mitochondrial DNA, and as a modulator of other transcription factors. Affects inflammatory responses, cellular proliferation and differentiation in target tissues. Involved in chromatin remodeling. Plays a role in rapid mRNA degradation by binding to the 5' UTR of target mRNAs and interacting with PNRC2 in a ligand-dependent manner which recruits the RNA helicase UPF1 and the mRNA-decapping enzyme DCP1A, leading to RNA decay. Could act as a coactivator for STAT5-dependent transcription upon growth hormone (GH) stimulation and could reveal an essential role of hepatic GR in the control of body growth. Mediates glucocorticoid-induced apoptosis. Promotes accurate chromosome segregation during mitosis. May act as a tumor suppressor. May play a negative role in adipogenesis through the regulation of lipolytic and antilipogenic gene expression. This chain is Glucocorticoid receptor (nr3c1), found in Xenopus laevis (African clawed frog).